We begin with the raw amino-acid sequence, 304 residues long: Prephenate dehydratase (304 aa).

The Prephenate dehydratase domain maps to 3-178 (RIAYFGPVGT…ARTRFLLMRR (176 aa)). An ACT domain is found at 193-271 (SIVAAAANRT…DVRFLGSFAR (79 aa)).

It catalyses the reaction prephenate + H(+) = 3-phenylpyruvate + CO2 + H2O. The protein operates within amino-acid biosynthesis; L-phenylalanine biosynthesis; phenylpyruvate from prephenate: step 1/1. The chain is Prephenate dehydratase (pheA) from Amycolatopsis methanolica.